The primary structure comprises 663 residues: tRNA (guanine(26)-N(2))-dimethyltransferase (663 aa).

A mitochondrion-targeting transit peptide spans 1–16; sequence MSLARTILWLSRPLRP. Residues 56-498 form the Trm1 methyltransferase domain; that stretch reads ATVTEGAAKI…APPEALWDIM (443 aa). Arg83 is an S-adenosyl-L-methionine binding site. Ser121 is modified (phosphoserine). 2 residues coordinate S-adenosyl-L-methionine: Arg165 and Asp183. Zn(2+)-binding residues include Cys347, Cys350, Cys383, and Cys386. The residue at position 516 (Ser516) is a Phosphoserine. The disordered stretch occupies residues 534–574; that stretch reads IREDANPSSRQRGLKRFQANPEANWGPRPRARPGGKAASED. The Nuclear localization signal signature appears at 540-572; sequence PSSRQRGLKRFQANPEANWGPRPRARPGGKAAS. The C3H1-type zinc-finger motif lies at 599-626; that stretch reads RLKTFPCKRFKEGTCQLGDQCCYSHSPA. Ser624 carries the phosphoserine modification. Residues 632-663 are disordered; it reads GDIPIEECPETTTKISPGPKAAAGGIPGPGVD.

This sequence belongs to the class I-like SAM-binding methyltransferase superfamily. Trm1 family.

The protein localises to the mitochondrion. It is found in the nucleus. It localises to the cytoplasm. The catalysed reaction is guanosine(26) in tRNA + 2 S-adenosyl-L-methionine = N(2)-dimethylguanosine(26) in tRNA + 2 S-adenosyl-L-homocysteine + 2 H(+). Its function is as follows. Dimethylates a single guanine residue at position 26 of most nuclear- and mitochondrial-encoded tRNAs using S-adenosyl-L-methionine as donor of the methyl groups. tRNA guanine(26)-dimethylation is required for redox homeostasis and ensure proper cellular proliferation and oxidative stress survival. The chain is tRNA (guanine(26)-N(2))-dimethyltransferase from Mus musculus (Mouse).